The following is a 378-amino-acid chain: 23S rRNA (uracil(747)-C(5))-methyltransferase RlmC (378 aa).

[4Fe-4S] cluster-binding residues include cysteine 3, cysteine 11, cysteine 14, and cysteine 87. Residues glutamine 212, phenylalanine 241, glutamate 262, and asparagine 309 each contribute to the S-adenosyl-L-methionine site. Cysteine 336 (nucleophile) is an active-site residue.

Belongs to the class I-like SAM-binding methyltransferase superfamily. RNA M5U methyltransferase family. RlmC subfamily.

It catalyses the reaction uridine(747) in 23S rRNA + S-adenosyl-L-methionine = 5-methyluridine(747) in 23S rRNA + S-adenosyl-L-homocysteine + H(+). In terms of biological role, catalyzes the formation of 5-methyl-uridine at position 747 (m5U747) in 23S rRNA. The polypeptide is 23S rRNA (uracil(747)-C(5))-methyltransferase RlmC (Shewanella halifaxensis (strain HAW-EB4)).